A 185-amino-acid chain; its full sequence is Ribosome-recycling factor (185 aa).

This sequence belongs to the RRF family.

The protein resides in the cytoplasm. Its function is as follows. Responsible for the release of ribosomes from messenger RNA at the termination of protein biosynthesis. May increase the efficiency of translation by recycling ribosomes from one round of translation to another. The polypeptide is Ribosome-recycling factor (Pectobacterium carotovorum subsp. carotovorum (strain PC1)).